The chain runs to 215 residues: Large ribosomal subunit protein uL3 (215 aa).

The segment at Gly136–Lys155 is disordered. Gln151 bears the N5-methylglutamine mark.

It belongs to the universal ribosomal protein uL3 family. Part of the 50S ribosomal subunit. Forms a cluster with proteins L14 and L19. Methylated by PrmB.

One of the primary rRNA binding proteins, it binds directly near the 3'-end of the 23S rRNA, where it nucleates assembly of the 50S subunit. The sequence is that of Large ribosomal subunit protein uL3 from Rickettsia canadensis (strain McKiel).